The primary structure comprises 528 residues: Lanosterol 14-alpha demethylase (528 aa).

The chain crosses the membrane as a helical span at residues 15-37; the sequence is LSLSVTQQISILLGVPFVYNLVW. Residue tyrosine 64 coordinates oteseconazole. Tyrosine 118 contributes to the itraconazole binding site. Glycine 307 is a posaconazole binding site. Histidine 377 provides a ligand contact to oteseconazole. Heme is bound at residue cysteine 470.

Belongs to the cytochrome P450 family. The cofactor is heme.

It is found in the endoplasmic reticulum membrane. The catalysed reaction is a 14alpha-methyl steroid + 3 reduced [NADPH--hemoprotein reductase] + 3 O2 = a Delta(14) steroid + formate + 3 oxidized [NADPH--hemoprotein reductase] + 4 H2O + 4 H(+). The enzyme catalyses a 14alpha-methyl steroid + reduced [NADPH--hemoprotein reductase] + O2 = a 14alpha-hydroxymethyl steroid + oxidized [NADPH--hemoprotein reductase] + H2O + H(+). It catalyses the reaction a 14alpha-hydroxymethyl steroid + reduced [NADPH--hemoprotein reductase] + O2 = a 14alpha-formyl steroid + oxidized [NADPH--hemoprotein reductase] + 2 H2O + H(+). It carries out the reaction a 14alpha-formyl steroid + reduced [NADPH--hemoprotein reductase] + O2 = a Delta(14) steroid + formate + oxidized [NADPH--hemoprotein reductase] + H2O + 2 H(+). The catalysed reaction is lanosterol + 3 reduced [NADPH--hemoprotein reductase] + 3 O2 = 4,4-dimethyl-5alpha-cholesta-8,14,24-trien-3beta-ol + formate + 3 oxidized [NADPH--hemoprotein reductase] + 4 H2O + 4 H(+). The enzyme catalyses lanosterol + reduced [NADPH--hemoprotein reductase] + O2 = 32-hydroxylanosterol + oxidized [NADPH--hemoprotein reductase] + H2O + H(+). It catalyses the reaction 32-hydroxylanosterol + reduced [NADPH--hemoprotein reductase] + O2 = 32-oxolanosterol + oxidized [NADPH--hemoprotein reductase] + 2 H2O + H(+). It carries out the reaction 32-oxolanosterol + reduced [NADPH--hemoprotein reductase] + O2 = 4,4-dimethyl-5alpha-cholesta-8,14,24-trien-3beta-ol + formate + oxidized [NADPH--hemoprotein reductase] + H2O + 2 H(+). The catalysed reaction is eburicol + 3 reduced [NADPH--hemoprotein reductase] + 3 O2 = 14-demethyleburicol + formate + 3 oxidized [NADPH--hemoprotein reductase] + 4 H2O + 4 H(+). The enzyme catalyses eburicol + reduced [NADPH--hemoprotein reductase] + O2 = 32-hydroxyeburicol + oxidized [NADPH--hemoprotein reductase] + H2O + H(+). It catalyses the reaction 32-hydroxyeburicol + reduced [NADPH--hemoprotein reductase] + O2 = 32-oxoeburicol + oxidized [NADPH--hemoprotein reductase] + 2 H2O + H(+). It carries out the reaction 32-oxoeburicol + reduced [NADPH--hemoprotein reductase] + O2 = 14-demethyleburicol + formate + oxidized [NADPH--hemoprotein reductase] + H2O + 2 H(+). The protein operates within steroid biosynthesis; zymosterol biosynthesis; zymosterol from lanosterol: step 1/6. The catalytic activity is inhibited by the binding of azoles clotrimazole, miconazole, fluconazole, ketoconazole, oteseconazole (VT-1161), tetraconazole, the triazole SCH39304, and the triazole derivative ICI 153066. Functionally, sterol 14alpha-demethylase that plays a critical role in the third module of ergosterol biosynthesis pathway, being ergosterol the major sterol component in fungal membranes that participates in a variety of functions. The third module or late pathway involves the ergosterol synthesis itself through consecutive reactions that mainly occur in the endoplasmic reticulum (ER) membrane. In filamentous fungi, during the initial step of this module, lanosterol (lanosta-8,24-dien-3beta-ol) can be metabolized to eburicol. Sterol 14alpha-demethylase catalyzes the three-step oxidative removal of the 14alpha-methyl group (C-32) of both these sterols in the form of formate, and converts eburicol and lanosterol to 14-demethyleburicol (4,4,24-trimethylergosta-8,14,24(28)-trienol) and 4,4-dimethyl-5alpha-cholesta-8,14,24-trien-3beta-ol, respectively, which are further metabolized by other enzymes in the pathway to ergosterol. Can also use substrates not intrinsic to fungi, such as 24,25-dihydrolanosterol (DHL), producing 4,4-dimethyl-8,14-cholestadien-3-beta-ol, but at lower rates than the endogenous substrates. The chain is Lanosterol 14-alpha demethylase from Candida albicans (strain SC5314 / ATCC MYA-2876) (Yeast).